A 327-amino-acid polypeptide reads, in one-letter code: DNA-directed RNA polymerase subunit alpha (327 aa).

The segment at Met-1 to Glu-233 is alpha N-terminal domain (alpha-NTD). An alpha C-terminal domain (alpha-CTD) region spans residues Leu-267–Lys-327.

Belongs to the RNA polymerase alpha chain family. As to quaternary structure, in plastids the minimal PEP RNA polymerase catalytic core is composed of four subunits: alpha, beta, beta', and beta''. When a (nuclear-encoded) sigma factor is associated with the core the holoenzyme is formed, which can initiate transcription.

It is found in the plastid. It localises to the chloroplast. It catalyses the reaction RNA(n) + a ribonucleoside 5'-triphosphate = RNA(n+1) + diphosphate. Functionally, DNA-dependent RNA polymerase catalyzes the transcription of DNA into RNA using the four ribonucleoside triphosphates as substrates. This chain is DNA-directed RNA polymerase subunit alpha, found in Lobularia maritima (Sweet alyssum).